Consider the following 279-residue polypeptide: ATP synthase gamma chain (279 aa).

The protein belongs to the ATPase gamma chain family. F-type ATPases have 2 components, CF(1) - the catalytic core - and CF(0) - the membrane proton channel. CF(1) has five subunits: alpha(3), beta(3), gamma(1), delta(1), epsilon(1). CF(0) has three main subunits: a, b and c.

Its subcellular location is the cell membrane. In terms of biological role, produces ATP from ADP in the presence of a proton gradient across the membrane. The gamma chain is believed to be important in regulating ATPase activity and the flow of protons through the CF(0) complex. The protein is ATP synthase gamma chain of Mycoplasma genitalium (strain ATCC 33530 / DSM 19775 / NCTC 10195 / G37) (Mycoplasmoides genitalium).